The sequence spans 723 residues: Probable cadmium-transporting ATPase (723 aa).

Residues 12–75 (EMKAYRVQGF…AGAFENLKVT (64 aa)) form the HMA domain. The Cd(2+) site is built by cysteine 23 and cysteine 26. The next 5 helical transmembrane spans lie at 103-123 (STLL…YVNG), 127-147 (IVTT…LFKV), 168-188 (IGGA…LFAI), 329-349 (YYTP…PLFF), and 361-381 (LAVL…ISIV). Aspartate 412 functions as the 4-aspartylphosphate intermediate in the catalytic mechanism. Transmembrane regions (helical) follow at residues 671-690 (IIKA…LLLV) and 694-716 (WLTL…LNGL).

Belongs to the cation transport ATPase (P-type) (TC 3.A.3) family. Type IB subfamily.

It is found in the cell membrane. The catalysed reaction is Cd(2+)(in) + ATP + H2O = Cd(2+)(out) + ADP + phosphate + H(+). Couples the hydrolysis of ATP with the export of cadmium. This Alkalihalophilus pseudofirmus (strain ATCC BAA-2126 / JCM 17055 / OF4) (Bacillus pseudofirmus) protein is Probable cadmium-transporting ATPase (cadA).